The primary structure comprises 192 residues: Peptidyl-tRNA hydrolase (192 aa).

Residue Tyr-14 participates in tRNA binding. His-19 functions as the Proton acceptor in the catalytic mechanism. TRNA is bound by residues Tyr-61, Asn-63, and Asn-107.

This sequence belongs to the PTH family. Monomer.

The protein resides in the cytoplasm. The catalysed reaction is an N-acyl-L-alpha-aminoacyl-tRNA + H2O = an N-acyl-L-amino acid + a tRNA + H(+). Hydrolyzes ribosome-free peptidyl-tRNAs (with 1 or more amino acids incorporated), which drop off the ribosome during protein synthesis, or as a result of ribosome stalling. Its function is as follows. Catalyzes the release of premature peptidyl moieties from peptidyl-tRNA molecules trapped in stalled 50S ribosomal subunits, and thus maintains levels of free tRNAs and 50S ribosomes. In Wolinella succinogenes (strain ATCC 29543 / DSM 1740 / CCUG 13145 / JCM 31913 / LMG 7466 / NCTC 11488 / FDC 602W) (Vibrio succinogenes), this protein is Peptidyl-tRNA hydrolase.